We begin with the raw amino-acid sequence, 350 residues long: Phosphate acyltransferase (350 aa).

The protein belongs to the PlsX family. In terms of assembly, homodimer. Probably interacts with PlsY.

It is found in the cytoplasm. It catalyses the reaction a fatty acyl-[ACP] + phosphate = an acyl phosphate + holo-[ACP]. Its pathway is lipid metabolism; phospholipid metabolism. Catalyzes the reversible formation of acyl-phosphate (acyl-PO(4)) from acyl-[acyl-carrier-protein] (acyl-ACP). This enzyme utilizes acyl-ACP as fatty acyl donor, but not acyl-CoA. The protein is Phosphate acyltransferase of Chelativorans sp. (strain BNC1).